The sequence spans 505 residues: ATP synthase subunit alpha (505 aa).

Position 170-177 (170-177 (GDRQTGKT)) interacts with ATP.

It belongs to the ATPase alpha/beta chains family. As to quaternary structure, F-type ATPases have 2 components, CF(1) - the catalytic core - and CF(0) - the membrane proton channel. CF(1) has five subunits: alpha(3), beta(3), gamma(1), delta(1), epsilon(1). CF(0) has four main subunits: a(1), b(1), b'(1) and c(9-12).

Its subcellular location is the cellular thylakoid membrane. The catalysed reaction is ATP + H2O + 4 H(+)(in) = ADP + phosphate + 5 H(+)(out). In terms of biological role, produces ATP from ADP in the presence of a proton gradient across the membrane. The alpha chain is a regulatory subunit. The sequence is that of ATP synthase subunit alpha from Prochlorococcus marinus (strain MIT 9303).